We begin with the raw amino-acid sequence, 403 residues long: Metacaspase-1A (403 aa).

The tract at residues 1-93 is disordered; that stretch reads MQHHHHSSYG…PPTDPVAFGH (93 aa). Positions 18–31 are enriched in low complexity; it reads GQAYRQQQPYYGQP. A compositionally biased stretch (pro residues) spans 32–55; that stretch reads SPQPYAQPPPPNYQRPSGYGPPPS. Active-site residues include H194 and C250.

It belongs to the peptidase C14B family.

Involved in cell death (apoptosis). This Aspergillus terreus (strain NIH 2624 / FGSC A1156) protein is Metacaspase-1A (casA).